The following is a 467-amino-acid chain: uncharacterized protein (467 aa).

Residue Lys290 is modified to N6-(pyridoxal phosphate)lysine.

It belongs to the class-III pyridoxal-phosphate-dependent aminotransferase family. Pyridoxal 5'-phosphate serves as cofactor.

This is an uncharacterized protein from Sinorhizobium fredii (strain NBRC 101917 / NGR234).